Consider the following 152-residue polypeptide: Endoribonuclease YbeY (152 aa).

Zn(2+) is bound by residues His-112, His-116, and His-122.

Belongs to the endoribonuclease YbeY family. The cofactor is Zn(2+).

The protein localises to the cytoplasm. In terms of biological role, single strand-specific metallo-endoribonuclease involved in late-stage 70S ribosome quality control and in maturation of the 3' terminus of the 16S rRNA. The sequence is that of Endoribonuclease YbeY from Pseudoalteromonas translucida (strain TAC 125).